Reading from the N-terminus, the 65-residue chain is Small ribosomal subunit protein eS17 (65 aa).

The protein belongs to the eukaryotic ribosomal protein eS17 family.

This is Small ribosomal subunit protein eS17 from Methanobrevibacter smithii (strain ATCC 35061 / DSM 861 / OCM 144 / PS).